Consider the following 167-residue polypeptide: Peptidoglycan L-alanyl-D-glutamate endopeptidase CwlK (167 aa).

The signal sequence occupies residues 1–26 (MNLPAKTFVILCILFLLDLCFSYIRH).

The protein belongs to the peptidase M15C family.

Its subcellular location is the cell membrane. In terms of biological role, cleaves the linkage of the L-alanine-D-glutamic acid of B.subtilis cell wall. This chain is Peptidoglycan L-alanyl-D-glutamate endopeptidase CwlK (cwlK), found in Bacillus subtilis (strain 168).